Reading from the N-terminus, the 228-residue chain is Ephrin-A5 (228 aa).

Positions 1–20 are cleaved as a signal peptide; that stretch reads MLHVEMLTLLFLVLWMCVFS. In terms of domain architecture, Ephrin RBD spans 29 to 162; sequence ADRYAVYWNS…KLKVFVRPTN (134 aa). Asparagine 37 carries an N-linked (GlcNAc...) asparagine glycan. Disulfide bonds link cysteine 62–cysteine 102 and cysteine 90–cysteine 151. The disordered stretch occupies residues 186 to 205; the sequence is EPADDTVHESAEPSRGENAA. Positions 190–200 are enriched in basic and acidic residues; that stretch reads DTVHESAEPSR. Asparagine 203 carries the GPI-anchor amidated asparagine lipid modification. A propeptide spans 204–228 (removed in mature form); it reads AAQTPRIPSRLLAILLFLLAMLLTL.

It belongs to the ephrin family. In terms of assembly, binds to the receptor tyrosine kinases EPHA2, EPHA3, EPHB1 and EPHB2. Interacts with EPHA8; activates EPHA8. Forms a ternary EFNA5-EPHA3-ADAM10 complex mediating EFNA5 extracellular domain shedding by ADAM10 which regulates the EFNA5-EPHA3 complex internalization and function. Expressed in brain, heart, placenta and lung.

The protein localises to the cell membrane. It is found in the membrane. Its subcellular location is the caveola. Cell surface GPI-bound ligand for Eph receptors, a family of receptor tyrosine kinases which are crucial for migration, repulsion and adhesion during neuronal, vascular and epithelial development. Binds promiscuously Eph receptors residing on adjacent cells, leading to contact-dependent bidirectional signaling into neighboring cells. The signaling pathway downstream of the receptor is referred to as forward signaling while the signaling pathway downstream of the ephrin ligand is referred to as reverse signaling. Induces compartmentalized signaling within a caveolae-like membrane microdomain when bound to the extracellular domain of its cognate receptor. This signaling event requires the activity of the Fyn tyrosine kinase. Activates the EPHA3 receptor to regulate cell-cell adhesion and cytoskeletal organization. With the receptor EPHA2 may regulate lens fiber cells shape and interactions and be important for lens transparency maintenance. May function actively to stimulate axon fasciculation. The interaction of EFNA5 with EPHA5 also mediates communication between pancreatic islet cells to regulate glucose-stimulated insulin secretion. Cognate/functional ligand for EPHA7, their interaction regulates brain development modulating cell-cell adhesion and repulsion. The sequence is that of Ephrin-A5 (Efna5) from Rattus norvegicus (Rat).